The following is a 751-amino-acid chain: MSLAFGWAAVILLLQTADTASAVTTPHDKARIFADLSPQEIKAVHSFLMSRKELGLESSKNLTLAKNSVFLIEMLLPKKKNVLKFLDEGRKSPVREARAIIFFGAQDHPNVTEFAVGPLPRPCYVQALSPRPGHHLSWSSRPISTAEYDLLYHMLNRAITPLHQFFLDTTGFSFLGCDDRFLTFTDVAPRGVESGQRRSWLIVQRYVEGYFLHPTGLEILVDHSSTDVQDWRVEQLWYNGKFYNSPEELAQKYAVGEVEAVVLEEVVLEDPLPGATEQPPLFSSYKPRGEFHTPVTVAGPHVVQPSGPRYKLEGNVVLYGDWSFSYRLRSSSGLQIFNVLFGGERVAYEVSVQEAVALYGGHTPAGMQTKYIDVGWGLGSVTHELAPGIDCPETATFLDAFHYYDSDGPVLYPRALCLFEMPTGVPLRRHFDSNFKGGFNFYAGLKGYVLVLRTTSTVYNYDYIWDFIFYPNGVMETKMHATGYVHATFYTPEGLRHGTRLQTHLLGNIHTHLVHYRVDLDVAGTKNSFRTLKTKLENITNPWSPSHSLVQPTLEQTQYSHEHQAAFRFGQTLPKYLLFSSPQKNRWGHRRSYRLQIHSMAEQVLPPGWQEERAVTWARYPLAVTKYRESERYSSSLYNQNDPWDPPVVFEEFLRNNENIENEDLVAWVTVGFLHIPHSEDVPNTATPGNCVGFLIRPFNFFEEDPSLASRDTVIVWPQDNGLNHVQRWIPENRDCLVSPPFSYNGTYKPV.

The N-terminal stretch at 1–22 (MSLAFGWAAVILLLQTADTASA) is a signal peptide. Residues Asn-61 and Asn-110 are each glycosylated (N-linked (GlcNAc...) asparagine). The active-site Proton acceptor is Asp-373. Cys-391 and Cys-417 are joined by a disulfide. Residue Tyr-461 is the Schiff-base intermediate with substrate; via topaquinone of the active site. Tyr-461 carries the post-translational modification 2',4',5'-topaquinone. 2 residues coordinate Cu(2+): His-510 and His-512. Ca(2+) contacts are provided by Asp-519, Leu-520, and Asp-521. An N-linked (GlcNAc...) asparagine glycan is attached at Asn-538. Residues Glu-562, Phe-653, Asn-656, Glu-658, Asp-664, and Leu-665 each contribute to the Ca(2+) site. His-675 lines the Cu(2+) pocket. Asn-745 carries N-linked (GlcNAc...) asparagine glycosylation.

It belongs to the copper/topaquinone oxidase family. Homodimer; disulfide-linked. It depends on Cu(2+) as a cofactor. The cofactor is Ca(2+). Requires L-topaquinone as cofactor. Topaquinone (TPQ) is generated by copper-dependent autoxidation of a specific tyrosyl residue. In terms of processing, N-glycosylated.

It localises to the secreted. Its subcellular location is the extracellular space. It is found in the cell membrane. It catalyses the reaction histamine + O2 + H2O = imidazole-4-acetaldehyde + H2O2 + NH4(+). The enzyme catalyses N(tau)-methylhistamine + O2 + H2O = 1-methylimidazole-4-acetaldehyde + H2O2 + NH4(+). It carries out the reaction putrescine + O2 + H2O = 4-aminobutanal + H2O2 + NH4(+). The catalysed reaction is cadaverine + O2 + H2O = 5-aminopentanal + H2O2 + NH4(+). With respect to regulation, inhibited by amiloride and amiloride analogs. Catalyzes the oxidative deamination of primary amines to the corresponding aldehydes with the concomitant production of hydrogen peroxide and ammonia. Its preferred substrates in vitro are the diamines histamine and 1-methylhistamine and it could therefore play a role in allergic and immune responses. Has a broad specificity for diamines and can also act on cadaverine and putrescine, two products of amino acid catabolism. It could also act on polyamines, like spermidine and spermine though less efficiently, and regulate various biological processes. This is Diamine oxidase [copper-containing] from Mus musculus (Mouse).